The chain runs to 124 residues: MSNYEVAMEAAWLVRDVKETDDAIGVAVSEAGKRLNETDKQYVEVEPGVTGCPACGEPFDAAFLAANTALVGLLLEIDIFNADSEEHAERIAKSEVGGALRDVPLEIIEVIETDGDEDGDRDDE.

Belongs to the UPF0212 family.

This chain is UPF0212 protein Hlac_0869, found in Halorubrum lacusprofundi (strain ATCC 49239 / DSM 5036 / JCM 8891 / ACAM 34).